Reading from the N-terminus, the 33-residue chain is Rugosin-A (33 aa).

Cys27 and Cys33 are disulfide-bonded.

The protein belongs to the frog skin active peptide (FSAP) family. Brevinin subfamily. In terms of tissue distribution, expressed by the skin glands.

The protein resides in the secreted. Its function is as follows. Has antibacterial activity against Gram-positive bacteria. The polypeptide is Rugosin-A (Glandirana rugosa (Japanese wrinkled frog)).